Here is a 393-residue protein sequence, read N- to C-terminus: Staphopain B (393 aa).

The N-terminal stretch at 1 to 36 (MNSSYKSRVFNIISIIMVSMLILSLGAFANNNKAKA) is a signal peptide. Residues 37 to 219 (DSHSKQLEIN…KVEENEAIQE (183 aa)) constitute a propeptide that is removed on maturation. Residues Cys243, His340, and Asn360 contribute to the active site.

This sequence belongs to the peptidase C47 family. As to quaternary structure, in the cytoplasm, prematurely activated/folded SspB forms a stable non-covalent complex with SspC. In terms of processing, proteolytically cleaved by staphylococcal serine protease (SspA).

The protein resides in the secreted. Its activity is regulated as follows. Prematurely activated/folded staphopain B is inhibited by staphostatin B (SspC), which is probably required to protect staphylococcal cytoplasmic proteins from degradation by SspB. In terms of biological role, cysteine protease that plays an important role in the inhibition of host innate immune response. Degrades host elastin, fibrogen, fibronectin and kininogen. Blocks phagocytosis of opsonised S.aureus by neutrophils and monocytes by inducing their death in a proteolytic activity-dependent manner. Decreases surface expression of the 'don't eat me' signal CD31 on neutrophils. Cleaves host galectin-3/LGALS3, thereby inhibiting the neutrophil-activating ability of the lectin. The polypeptide is Staphopain B (sspB) (Staphylococcus aureus (strain MSSA476)).